A 362-amino-acid chain; its full sequence is Microfibril-associated glycoprotein 3 (362 aa).

Positions 1-19 (MKLHCCLFTLVASIIVPAA) are cleaved as a signal peptide. Topologically, residues 20-146 (FVLEDVDFNQ…TLRVIFTSGD (127 aa)) are extracellular. 3 N-linked (GlcNAc...) asparagine glycosylation sites follow: Asn-36, Asn-41, and Asn-110. The Ig-like C2-type domain occupies 45-137 (PSSFELSASS…SPIRASYSVT (93 aa)). Cys-73 and Cys-124 form a disulfide bridge. A helical transmembrane segment spans residues 147–167 (MSVYYMIVCLIAFTITLILNV). At 168–362 (TRLCMMSSHL…KDGAYENSQL (195 aa)) the chain is on the cytoplasmic side. Disordered regions lie at residues 282–306 (GIYVINPEMGRSNSPGGDSDDGSLN) and 319–362 (HLQS…NSQL). The segment covering 319 to 337 (HLQSETKSIDTESQGSSHF) has biased composition (polar residues).

In terms of processing, glycosylated.

The protein localises to the cell membrane. Component of the elastin-associated microfibrils. This is Microfibril-associated glycoprotein 3 (MFAP3) from Pongo abelii (Sumatran orangutan).